The chain runs to 426 residues: Glutamate-1-semialdehyde 2,1-aminomutase (426 aa).

Residue Lys-265 is modified to N6-(pyridoxal phosphate)lysine.

Belongs to the class-III pyridoxal-phosphate-dependent aminotransferase family. HemL subfamily. Homodimer. Pyridoxal 5'-phosphate is required as a cofactor.

It localises to the cytoplasm. The catalysed reaction is (S)-4-amino-5-oxopentanoate = 5-aminolevulinate. The protein operates within porphyrin-containing compound metabolism; protoporphyrin-IX biosynthesis; 5-aminolevulinate from L-glutamyl-tRNA(Glu): step 2/2. The polypeptide is Glutamate-1-semialdehyde 2,1-aminomutase (Escherichia coli O127:H6 (strain E2348/69 / EPEC)).